Consider the following 520-residue polypeptide: Cytochrome P450 734A1 (520 aa).

Residues 13 to 33 form a helical membrane-spanning segment; the sequence is VLVLSVILSLVIVKGMSLLWW. Position 463 (Cys-463) interacts with heme.

It belongs to the cytochrome P450 family. Heme serves as cofactor.

It is found in the membrane. Functionally, cytochrome P450 involved in brassinosteroids (BRs) inactivation and regulation of BRs homeostasis. Inactivates the BRs castasterone (CS) and brassinolide (BL) through carbon 26 hydroxylation. Acts in association with CYP72C1 to inactivate BRs and modulate photomorphogenesis. This chain is Cytochrome P450 734A1 (CYP734A1), found in Arabidopsis thaliana (Mouse-ear cress).